The primary structure comprises 542 residues: Protein phosphatase 1G (542 aa).

G2 carries the N-myristoyl glycine lipid modification. R22 is modified (omega-N-methylarginine). Residues 26 to 502 enclose the PPM-type phosphatase domain; it reads PYGFSAMQGW…DNMTCIIICF (477 aa). Mn(2+) contacts are provided by D60 and G61. Disordered regions lie at residues 118–139 and 162–325; these read AGRP…DVDN and QNCQ…SDSG. T122 bears the Phosphothreonine mark. Acidic residues-rich tracts occupy residues 123-139 and 259-309; these read EDED…DVDN and DSED…DEEM. K380 is modified (N6-acetyllysine). Residues D438 and D493 each coordinate Mn(2+). The segment at 510–542 is disordered; that stretch reads LQPESGKRKLEEALSTEGAEENGNSDKKKAKRD. S524 carries the post-translational modification Phosphoserine.

This sequence belongs to the PP2C family. In terms of assembly, interacts with NOL3; may dephosphorylate NOL3. Requires Mg(2+) as cofactor. It depends on Mn(2+) as a cofactor.

Its subcellular location is the cytoplasm. The protein resides in the membrane. It catalyses the reaction O-phospho-L-seryl-[protein] + H2O = L-seryl-[protein] + phosphate. The catalysed reaction is O-phospho-L-threonyl-[protein] + H2O = L-threonyl-[protein] + phosphate. The polypeptide is Protein phosphatase 1G (Rattus norvegicus (Rat)).